The sequence spans 61 residues: Photosystem II reaction center protein K (61 aa).

The propeptide occupies 1–24 (MLNIFNLICICFNSALFSSTFLVA). Residues 40-60 (MPVIPLFFLLLAFVWQAAVSF) traverse the membrane as a helical segment.

Belongs to the PsbK family. In terms of assembly, PSII is composed of 1 copy each of membrane proteins PsbA, PsbB, PsbC, PsbD, PsbE, PsbF, PsbH, PsbI, PsbJ, PsbK, PsbL, PsbM, PsbT, PsbX, PsbY, PsbZ, Psb30/Ycf12, at least 3 peripheral proteins of the oxygen-evolving complex and a large number of cofactors. It forms dimeric complexes.

Its subcellular location is the plastid. The protein resides in the chloroplast thylakoid membrane. Its function is as follows. One of the components of the core complex of photosystem II (PSII). PSII is a light-driven water:plastoquinone oxidoreductase that uses light energy to abstract electrons from H(2)O, generating O(2) and a proton gradient subsequently used for ATP formation. It consists of a core antenna complex that captures photons, and an electron transfer chain that converts photonic excitation into a charge separation. The sequence is that of Photosystem II reaction center protein K from Sinapis alba (White mustard).